A 251-amino-acid chain; its full sequence is Capsid protein (251 aa).

The interval 1–29 (MPKRDAPWRSMAGTSKVSRNANYSPRSGI) is disordered. Positions 3–20 (KRDAPWRSMAGTSKVSRN) match the Bipartite nuclear localization signal motif. Residues 12–25 (AGTSKVSRNANYSP) show a composition bias toward polar residues. The Nuclear localization signal signature appears at 35 to 49 (KAAEWVNRPMYRKPR). A zinc finger lies at 63 to 80 (CEGPCKVQSFEQRHDILH). The short motif at 96 to 117 (ITHRVGKRFCVKSVYILGKIWM) is the Nuclear export signal element. Residues 195-242 (RRFWKVNNHVVYNHQEAGKYENHTENALLLYMACTHASNPVYATLKIR) carry the Bipartite nuclear localization signal motif.

Belongs to the geminiviridae capsid protein family. In terms of assembly, homomultimer. Binds to single-stranded and double-stranded viral DNA. Interacts (via nuclear localization signals) with host importin alpha-1a.

The protein resides in the virion. It is found in the host nucleus. In terms of biological role, encapsidates the viral DNA into characteristic twinned ('geminate') particles. Binds the genomic viral ssDNA and shuttles it into and out of the cell nucleus. The CP of bipartite geminiviruses is not required for cell-to-cell or systemic movement. The polypeptide is Capsid protein (Solanum tuberosum (Potato)).